The chain runs to 442 residues: Glutamate synthase large subunit-like protein (442 aa).

Residues 108–133 (LGRGATASGTSTTTGDGGMTDEERGH) form a disordered region. The span at 109 to 121 (GRGATASGTSTTT) shows a compositional bias: low complexity.

It belongs to the glutamate synthase family.

The protein is Glutamate synthase large subunit-like protein (glxD) of Rhizobium meliloti (strain 1021) (Ensifer meliloti).